Here is a 162-residue protein sequence, read N- to C-terminus: Putative colanic acid biosynthesis acetyltransferase WcaB (162 aa).

It belongs to the transferase hexapeptide repeat family.

The protein operates within slime biogenesis; slime polysaccharide biosynthesis. This is Putative colanic acid biosynthesis acetyltransferase WcaB (wcaB) from Escherichia coli O157:H7.